The primary structure comprises 1376 residues: Phospholipid-transporting ATPase DRS2 (1376 aa).

The span at Met1–Gln10 shows a compositional bias: gly residues. Disordered stretches follow at residues Met1–Arg151 and Gly180–Asp217. At Met1 to Arg306 the chain is on the cytoplasmic side. Positions Asp40–Glu50 are enriched in basic and acidic residues. Residues Gln85 to Asn96 are compositionally biased toward low complexity. The segment covering Val97–Gly115 has biased composition (polar residues). Residues Pro191 to His203 show a composition bias toward gly residues. A helical transmembrane segment spans residues Phe307–Glu327. Topologically, residues Asp328 to Val509 are extracellular. N-linked (GlcNAc...) asparagine glycans are attached at residues Asn339, Asn433, and Asn490. A helical membrane pass occupies residues Leu510–Ile530. At Arg531–Asp559 the chain is on the cytoplasmic side. A helical transmembrane segment spans residues Met560–Glu580. At Met581 to Ser1107 the chain is on the extracellular side. Asp625 functions as the 4-aspartylphosphate intermediate in the catalytic mechanism. The ATP site is built by Asp625, Lys626, and Thr627. Asp625 provides a ligand contact to Mg(2+). Thr627 contacts Mg(2+). Asn679 carries N-linked (GlcNAc...) asparagine glycosylation. ATP contacts are provided by Glu720 and Phe761. Asn762 carries N-linked (GlcNAc...) asparagine glycosylation. Positions 763, 766, 784, 817, 818, 898, 899, 900, 991, and 997 each coordinate ATP. Mg(2+) is bound at residue Asp1018. Residues Asn1021 and Asp1022 each contribute to the ATP site. Asp1022 lines the Mg(2+) pocket. Asn1083 carries N-linked (GlcNAc...) asparagine glycosylation. The chain crosses the membrane as a helical span at residues Trp1108 to Leu1128. Residues Asp1129–Ala1165 are Cytoplasmic-facing. A helical transmembrane segment spans residues Val1166–Leu1186. The Extracellular segment spans residues Glu1187–Gln1190. A helical transmembrane segment spans residues Ile1191–Gly1211. Position 1212 (Lys1212) interacts with a 1,2-diacyl-sn-glycero-3-phospho-(1D-myo-inositol 4-phosphate). Topologically, residues Lys1212–His1224 are cytoplasmic. Residues Val1225–Val1245 traverse the membrane as a helical segment. The Extracellular portion of the chain corresponds to Ala1246–Gly1257. A helical transmembrane segment spans residues Ile1258–Leu1278. At Cys1279–Thr1376 the chain is on the cytoplasmic side. A 1,2-diacyl-sn-glycero-3-phospho-(1D-myo-inositol 4-phosphate) contacts are provided by Arg1282, Trp1286, Lys1287, Tyr1298, and His1299.

Belongs to the cation transport ATPase (P-type) (TC 3.A.3) family. Type IV subfamily. Mg(2+) is required as a cofactor.

It localises to the cell membrane. It is found in the golgi apparatus. Its subcellular location is the trans-Golgi network membrane. The catalysed reaction is ATP + H2O + phospholipidSide 1 = ADP + phosphate + phospholipidSide 2.. It catalyses the reaction a 1,2-diacyl-sn-glycero-3-phospho-L-serine(out) + ATP + H2O = a 1,2-diacyl-sn-glycero-3-phospho-L-serine(in) + ADP + phosphate + H(+). The enzyme catalyses a 1,2-diacyl-sn-glycero-3-phosphoethanolamine(out) + ATP + H2O = a 1,2-diacyl-sn-glycero-3-phosphoethanolamine(in) + ADP + phosphate + H(+). Catalytic component of a P4-ATPase flippase complex which catalyzes the hydrolysis of ATP coupled to the transport of phosphatidylserine and small amounts of ethanolamine from the lumen to the cytosolic leaflet of the trans-Golgi network and cell membrane and ensures the maintenance of asymmetric distribution of phospholipids. Required for efficient vesicle transport during toxin secretion. The chain is Phospholipid-transporting ATPase DRS2 (DRS2) from Verticillium dahliae (strain VdLs.17 / ATCC MYA-4575 / FGSC 10137) (Verticillium wilt).